The chain runs to 332 residues: Methylthioribose-1-phosphate isomerase (332 aa).

Residues 44 to 46, R87, and Q192 contribute to the substrate site; that span reads RGA. Catalysis depends on D233, which acts as the Proton donor. 243 to 244 lines the substrate pocket; sequence NK.

Belongs to the eIF-2B alpha/beta/delta subunits family. MtnA subfamily.

The enzyme catalyses 5-(methylsulfanyl)-alpha-D-ribose 1-phosphate = 5-(methylsulfanyl)-D-ribulose 1-phosphate. Its pathway is amino-acid biosynthesis; L-methionine biosynthesis via salvage pathway; L-methionine from S-methyl-5-thio-alpha-D-ribose 1-phosphate: step 1/6. Its function is as follows. Catalyzes the interconversion of methylthioribose-1-phosphate (MTR-1-P) into methylthioribulose-1-phosphate (MTRu-1-P). This chain is Methylthioribose-1-phosphate isomerase, found in Dehalococcoides mccartyi (strain ATCC BAA-2100 / JCM 16839 / KCTC 5957 / BAV1).